Consider the following 465-residue polypeptide: Ribulose bisphosphate carboxylase large chain (465 aa).

Residue Lys4 is modified to N6,N6,N6-trimethyllysine. The substrate site is built by Asn113 and Thr163. Residue Lys165 is the Proton acceptor of the active site. A substrate-binding site is contributed by Lys167. Residues Lys191, Asp193, and Glu194 each coordinate Mg(2+). Lys191 carries the N6-carboxylysine modification. His284 functions as the Proton acceptor in the catalytic mechanism. Residues Arg285, His317, and Ser369 each contribute to the substrate site.

Belongs to the RuBisCO large chain family. Type I subfamily. As to quaternary structure, heterohexadecamer of 8 large chains and 8 small chains; disulfide-linked. The disulfide link is formed within the large subunit homodimers. It depends on Mg(2+) as a cofactor. Post-translationally, the disulfide bond which can form in the large chain dimeric partners within the hexadecamer appears to be associated with oxidative stress and protein turnover.

Its subcellular location is the plastid. The protein localises to the chloroplast. It catalyses the reaction 2 (2R)-3-phosphoglycerate + 2 H(+) = D-ribulose 1,5-bisphosphate + CO2 + H2O. The catalysed reaction is D-ribulose 1,5-bisphosphate + O2 = 2-phosphoglycolate + (2R)-3-phosphoglycerate + 2 H(+). Functionally, ruBisCO catalyzes two reactions: the carboxylation of D-ribulose 1,5-bisphosphate, the primary event in carbon dioxide fixation, as well as the oxidative fragmentation of the pentose substrate in the photorespiration process. Both reactions occur simultaneously and in competition at the same active site. The polypeptide is Ribulose bisphosphate carboxylase large chain (Epacris sp).